A 207-amino-acid polypeptide reads, in one-letter code: MADILTQLQTCLDQLATQFYATIGYLSTYHDNSPAIPPPDVPDAAPALAKIPKNSTAPPVPAGAPVPALSQASPPAQNPAHGAAGAGTSVGEGAQTPGPAAGAGADPNLPAPDSPRTFASRQRELARDLIIKEQQIEYLISVLPGIDSSEAEQEKRIRELEGELRQVEEERELKMRELKRLRRTLENVLTAVETGLYGDRELLEKYA.

A disordered region spans residues Ile36–Ser120. The span at Gly91–Asn108 shows a compositional bias: low complexity. The stretch at Ile146 to Thr194 forms a coiled coil.

This sequence belongs to the Mediator complex subunit 21 family. As to quaternary structure, component of the Mediator complex.

It localises to the nucleus. In terms of biological role, component of the Mediator complex, a coactivator involved in the regulated transcription of nearly all RNA polymerase II-dependent genes. Mediator functions as a bridge to convey information from gene-specific regulatory proteins to the basal RNA polymerase II transcription machinery. Mediator is recruited to promoters by direct interactions with regulatory proteins and serves as a scaffold for the assembly of a functional preinitiation complex with RNA polymerase II and the general transcription factors. The sequence is that of Mediator of RNA polymerase II transcription subunit 21 (srb7) from Aspergillus fumigatus (strain ATCC MYA-4609 / CBS 101355 / FGSC A1100 / Af293) (Neosartorya fumigata).